Here is a 335-residue protein sequence, read N- to C-terminus: Nucleoid-associated protein YejK (335 aa).

This sequence belongs to the YejK family.

It is found in the cytoplasm. The protein resides in the nucleoid. This is Nucleoid-associated protein YejK from Salmonella schwarzengrund (strain CVM19633).